Here is a 788-residue protein sequence, read N- to C-terminus: Ribonucleoside-diphosphate reductase large subunit (788 aa).

Residues 7 to 98 form the ATP-cone domain; the sequence is TYVVKRDGRK…VSNLHKKTNK (92 aa). Residues 11 to 12, 17 to 23, threonine 59, and aspartate 63 contribute to the ATP site; these read KR and EDVHFDK. 2 residues coordinate GDP: serine 208 and serine 223. Cysteine 224 and cysteine 450 are oxidised to a cystine. DTTP contacts are provided by residues 232–234, lysine 249, arginine 262, and 269–270; these read DSI and AG. GDP is bound at residue asparagine 433. Catalysis depends on asparagine 433, which acts as the Proton acceptor. The active-site Cysteine radical intermediate is cysteine 435. GDP is bound by residues glutamate 437 and 610-613; that span reads TAST. Glutamate 437 acts as the Proton acceptor in catalysis.

This sequence belongs to the ribonucleoside diphosphate reductase large chain family. As to quaternary structure, heterodimer of a large and a small subunit.

The enzyme catalyses a 2'-deoxyribonucleoside 5'-diphosphate + [thioredoxin]-disulfide + H2O = a ribonucleoside 5'-diphosphate + [thioredoxin]-dithiol. With respect to regulation, under complex allosteric control mediated by deoxynucleoside triphosphates and ATP binding to separate specificity and activation sites on the large subunit. The type of nucleotide bound at the specificity site determines substrate preference. It seems probable that ATP makes the enzyme reduce CDP and UDP, dGTP favors ADP reduction and dTTP favors GDP reduction. Stimulated by ATP and inhibited by dATP binding to the activity site. In terms of biological role, provides the precursors necessary for DNA synthesis. Catalyzes the biosynthesis of deoxyribonucleotides from the corresponding ribonucleotides. The polypeptide is Ribonucleoside-diphosphate reductase large subunit (rnr-1) (Caenorhabditis elegans).